Consider the following 284-residue polypeptide: Cytosolic Fe-S cluster assembly factor NUBP2 homolog (284 aa).

Gly-27–Ser-34 lines the ATP pocket. The [4Fe-4S] cluster site is built by Cys-200 and Cys-203.

This sequence belongs to the Mrp/NBP35 ATP-binding proteins family. NUBP2/CFD1 subfamily. In terms of assembly, heterotetramer of 2 NUBP1 and 2 NUBP2 chains. [4Fe-4S] cluster serves as cofactor.

Its subcellular location is the cytoplasm. Functionally, component of the cytosolic iron-sulfur (Fe/S) protein assembly (CIA) machinery. Required for maturation of extramitochondrial Fe-S proteins. The NUBP1-NUBP2 heterotetramer forms a Fe-S scaffold complex, mediating the de novo assembly of an Fe-S cluster and its transfer to target apoproteins. The polypeptide is Cytosolic Fe-S cluster assembly factor NUBP2 homolog (Monosiga brevicollis (Choanoflagellate)).